We begin with the raw amino-acid sequence, 117 residues long: Fluoride-specific ion channel FluC 2 (117 aa).

4 helical membrane-spanning segments follow: residues 1–21 (MISIILVMIGGGFGAIARSAI), 33–53 (LPIATLIVNLVGSFLIGLTIG), 60–80 (WFPAFFVTGFLGGLTTFSTLA), and 95–115 (LFLNYSLLQFIIGFIACYIGY). Residues Gly71 and Thr74 each contribute to the Na(+) site.

The protein belongs to the fluoride channel Fluc/FEX (TC 1.A.43) family.

The protein resides in the cell membrane. The enzyme catalyses fluoride(in) = fluoride(out). Its activity is regulated as follows. Na(+) is not transported, but it plays an essential structural role and its presence is essential for fluoride channel function. Its function is as follows. Fluoride-specific ion channel. Important for reducing fluoride concentration in the cell, thus reducing its toxicity. The polypeptide is Fluoride-specific ion channel FluC 2 (Staphylococcus aureus (strain COL)).